A 431-amino-acid chain; its full sequence is 3-isopropylmalate dehydratase large subunit (431 aa).

[4Fe-4S] cluster-binding residues include Cys308, Cys368, and Cys371.

The protein belongs to the aconitase/IPM isomerase family. LeuC type 2 subfamily. Heterodimer of LeuC and LeuD. [4Fe-4S] cluster serves as cofactor.

It catalyses the reaction (2R,3S)-3-isopropylmalate = (2S)-2-isopropylmalate. Its pathway is amino-acid biosynthesis; L-leucine biosynthesis; L-leucine from 3-methyl-2-oxobutanoate: step 2/4. Functionally, catalyzes the isomerization between 2-isopropylmalate and 3-isopropylmalate, via the formation of 2-isopropylmaleate. This is 3-isopropylmalate dehydratase large subunit from Desulfosudis oleivorans (strain DSM 6200 / JCM 39069 / Hxd3) (Desulfococcus oleovorans).